Consider the following 248-residue polypeptide: ATP synthase delta chain, chloroplastic (248 aa).

The N-terminal 60 residues, 1-60 (MAALQQTPITFQSRSPPPTQIISGPTAKLSFSGGLKLPKLTIKLRSNRTSRRGGGAAGSK), are a transit peptide targeting the chloroplast.

It belongs to the ATPase delta chain family. In terms of assembly, F-type ATPases have 2 components, CF(1) - the catalytic core - and CF(0) - the membrane proton channel. CF(1) has five subunits: alpha(3), beta(3), gamma(1), delta(1), epsilon(1). CF(0) has three main subunits: a, b and c.

Its subcellular location is the plastid. The protein resides in the chloroplast thylakoid membrane. Its function is as follows. This protein seems to be part of the stalk that links CF(0) to CF(1). It either transmits conformational changes from CF(0) into CF(1) or is implicated in proton conduction. This chain is ATP synthase delta chain, chloroplastic (ATPD), found in Nicotiana tabacum (Common tobacco).